Consider the following 235-residue polypeptide: Phosphoribosylaminoimidazole-succinocarboxamide synthase (235 aa).

The protein belongs to the SAICAR synthetase family.

The catalysed reaction is 5-amino-1-(5-phospho-D-ribosyl)imidazole-4-carboxylate + L-aspartate + ATP = (2S)-2-[5-amino-1-(5-phospho-beta-D-ribosyl)imidazole-4-carboxamido]succinate + ADP + phosphate + 2 H(+). Its pathway is purine metabolism; IMP biosynthesis via de novo pathway; 5-amino-1-(5-phospho-D-ribosyl)imidazole-4-carboxamide from 5-amino-1-(5-phospho-D-ribosyl)imidazole-4-carboxylate: step 1/2. The protein is Phosphoribosylaminoimidazole-succinocarboxamide synthase of Streptococcus pneumoniae (strain ATCC 700669 / Spain 23F-1).